The chain runs to 274 residues: Penicillin-insensitive murein endopeptidase (274 aa).

The N-terminal stretch at 1 to 19 is a signal peptide; sequence MKNTVIALLALLASAGSLA. Disulfide bonds link Cys44–Cys265, Cys187–Cys235, and Cys216–Cys223. Zn(2+) is bound by residues His110, His113, Asp120, Asp147, His150, and His211. The segment at 224–263 is disordered; the sequence is EDQAPPPPGDGCGAELQSWFEPPKPGSTPPVKKTPPPLPP. The segment covering 245–263 has biased composition (pro residues); the sequence is PPKPGSTPPVKKTPPPLPP.

Belongs to the peptidase M74 family. Dimer. The cofactor is Zn(2+).

Its subcellular location is the periplasm. In terms of biological role, murein endopeptidase that cleaves the D-alanyl-meso-2,6-diamino-pimelyl amide bond that connects peptidoglycan strands. Likely plays a role in the removal of murein from the sacculus. The chain is Penicillin-insensitive murein endopeptidase from Klebsiella pneumoniae subsp. pneumoniae (strain ATCC 700721 / MGH 78578).